Here is a 107-residue protein sequence, read N- to C-terminus: Iron-binding protein IscA (107 aa).

3 residues coordinate Fe cation: cysteine 35, cysteine 99, and cysteine 101.

This sequence belongs to the HesB/IscA family. Homodimer; may form tetramers and higher multimers. The cofactor is Fe cation.

Is able to transfer iron-sulfur clusters to apo-ferredoxin. Multiple cycles of [2Fe2S] cluster formation and transfer are observed, suggesting that IscA acts catalytically. Recruits intracellular free iron so as to provide iron for the assembly of transient iron-sulfur cluster in IscU in the presence of IscS, L-cysteine and the thioredoxin reductase system TrxA/TrxB. The sequence is that of Iron-binding protein IscA from Enterobacter sp. (strain 638).